Reading from the N-terminus, the 149-residue chain is Nucleoside diphosphate kinase (149 aa).

Residues K9, F57, R85, T91, R102, and N112 each coordinate ATP. H115 acts as the Pros-phosphohistidine intermediate in catalysis.

This sequence belongs to the NDK family. As to quaternary structure, homotetramer. The cofactor is Mg(2+).

The protein resides in the cytoplasm. It carries out the reaction a 2'-deoxyribonucleoside 5'-diphosphate + ATP = a 2'-deoxyribonucleoside 5'-triphosphate + ADP. The catalysed reaction is a ribonucleoside 5'-diphosphate + ATP = a ribonucleoside 5'-triphosphate + ADP. Functionally, major role in the synthesis of nucleoside triphosphates other than ATP. The ATP gamma phosphate is transferred to the NDP beta phosphate via a ping-pong mechanism, using a phosphorylated active-site intermediate. In Microcystis aeruginosa (strain NIES-843 / IAM M-2473), this protein is Nucleoside diphosphate kinase.